A 396-amino-acid chain; its full sequence is MMFRTLDDANVQSKRVLVRVDLNVPMANGEVTDLTRIERIVPTIAELSRKGAKVILLAHFGRPKGVASDENSLKHVVKPLSKVLDHSVHFAEDCIGDKAKAAVDALKDGDVLLLENTRFHKGEEKNDPEFVQALAANGDLYVNDAFSAAHRAHASTEGLAHVLPAFAGRAMQAELEALEKGLGNPARPVVAIVGGAKVSTKLDLLSNLIEKVDALVIGGGMANTFLAAKGLDVGKSLCEHELASTAREIMAKAETTKCAIILPVDAIVGWHFAADTPHQTYGVDSVPGDAMILDAGELSTDLIASAIDDAATLVWNGPLGAFELRPFDTATVKVARHVAKRTKEGKLVSVGGGGDTVAALNHAGVADDFTYISTAGGAFLEWMEGKPLPGVDVLKK.

Substrate contacts are provided by residues 21–23, Arg-36, 59–62, Arg-118, and Arg-151; these read DLN and HFGR. Residues Lys-201, Glu-323, and 353-356 each bind ATP; that span reads GGDT.

Belongs to the phosphoglycerate kinase family. Monomer.

It localises to the cytoplasm. It catalyses the reaction (2R)-3-phosphoglycerate + ATP = (2R)-3-phospho-glyceroyl phosphate + ADP. It participates in carbohydrate degradation; glycolysis; pyruvate from D-glyceraldehyde 3-phosphate: step 2/5. This is Phosphoglycerate kinase from Brucella melitensis biotype 1 (strain ATCC 23456 / CCUG 17765 / NCTC 10094 / 16M).